The primary structure comprises 69 residues: Fumarase D (69 aa).

It belongs to the FumD family.

It catalyses the reaction (S)-malate = fumarate + H2O. Functionally, in vitro catalyzes the addition of water to fumarate, forming malate. Cannot catalyze the reverse reaction. Cannot use the cis-isomer maleate as substrate. The protein is Fumarase D of Shigella flexneri.